A 147-amino-acid chain; its full sequence is Ribosomal RNA large subunit methyltransferase H (147 aa).

Residues leucine 64, glycine 95, and 114–119 (LSSLTL) contribute to the S-adenosyl-L-methionine site.

Belongs to the RNA methyltransferase RlmH family. In terms of assembly, homodimer.

The protein resides in the cytoplasm. The catalysed reaction is pseudouridine(1915) in 23S rRNA + S-adenosyl-L-methionine = N(3)-methylpseudouridine(1915) in 23S rRNA + S-adenosyl-L-homocysteine + H(+). In terms of biological role, specifically methylates the pseudouridine at position 1915 (m3Psi1915) in 23S rRNA. The protein is Ribosomal RNA large subunit methyltransferase H of Polynucleobacter asymbioticus (strain DSM 18221 / CIP 109841 / QLW-P1DMWA-1) (Polynucleobacter necessarius subsp. asymbioticus).